Reading from the N-terminus, the 195-residue chain is ATP-dependent Clp protease proteolytic subunit (195 aa).

The Nucleophile role is filled by serine 99. Histidine 124 is a catalytic residue.

It belongs to the peptidase S14 family. Fourteen ClpP subunits assemble into 2 heptameric rings which stack back to back to give a disk-like structure with a central cavity, resembling the structure of eukaryotic proteasomes.

Its subcellular location is the cytoplasm. The catalysed reaction is Hydrolysis of proteins to small peptides in the presence of ATP and magnesium. alpha-casein is the usual test substrate. In the absence of ATP, only oligopeptides shorter than five residues are hydrolyzed (such as succinyl-Leu-Tyr-|-NHMec, and Leu-Tyr-Leu-|-Tyr-Trp, in which cleavage of the -Tyr-|-Leu- and -Tyr-|-Trp bonds also occurs).. Functionally, cleaves peptides in various proteins in a process that requires ATP hydrolysis. Has a chymotrypsin-like activity. Plays a major role in the degradation of misfolded proteins. The protein is ATP-dependent Clp protease proteolytic subunit of Caldicellulosiruptor saccharolyticus (strain ATCC 43494 / DSM 8903 / Tp8T 6331).